Here is a 362-residue protein sequence, read N- to C-terminus: Caspase activity and apoptosis inhibitor 1 (362 aa).

A compositionally biased stretch (basic residues) spans 1–14 (MTGKKSSREKRRKR). Disordered stretches follow at residues 1–44 (MTGK…SGCG) and 65–101 (TGGG…GSLQ). The span at 19–32 (AAAALAAPDLVPAV) shows a compositional bias: low complexity. Composition is skewed to gly residues over residues 33-44 (GGSGSGSTSGCG) and 65-74 (TGGGSGGSCW). At serine 89 the chain carries Phosphoserine. Threonine 90 carries the post-translational modification Phosphothreonine. Lysine 105 participates in a covalent cross-link: Glycyl lysine isopeptide (Lys-Gly) (interchain with G-Cter in SUMO2). 2 positions are modified to phosphoserine: serine 121 and serine 204. Disordered regions lie at residues 226–251 (SCVD…GKGE), 269–291 (GPCN…EAGQ), and 309–332 (LAES…DVQP). A compositionally biased stretch (basic and acidic residues) spans 235–251 (RENKQPEGLELKQGKGE). Positions 273–282 (EEAAAPEVPE) are enriched in low complexity. Positions 282 to 312 (ENTVQSEAGQIDDLEKDIEKSVNEILGLAES) form a coiled coil. Serine 313 carries the phosphoserine modification.

In terms of biological role, anti-apoptotic protein that modulates a caspase-10 dependent mitochondrial caspase-3/9 feedback amplification loop. This is Caspase activity and apoptosis inhibitor 1 (CAAP1) from Bos taurus (Bovine).